The primary structure comprises 431 residues: Mitochondrial distribution and morphology protein 12 (431 aa).

One can recognise an SMP-LTD domain in the interval 1-431 (MSIDLNWETL…VYPSFWTFLV (431 aa)). Disordered regions lie at residues 68-153 (DFYE…GVST) and 209-289 (QSHT…PKPE). Positions 69 to 96 (FYEDLDDDDGGSDEDDEGSNSCQTDEEN) are enriched in acidic residues. Residues 97–113 (EAAKTLRERRKMDRVER) show a composition bias toward basic and acidic residues. The span at 115–129 (ANGSSNVSNPPSYTD) shows a compositional bias: polar residues. Over residues 241 to 252 (SASTLAVSSSTT) the composition is skewed to low complexity.

It belongs to the MDM12 family. In terms of assembly, component of the ER-mitochondria encounter structure (ERMES) or MDM complex, composed of mmm1, mdm10, mdm12 and mdm34. A mmm1 homodimer associates with one molecule of mdm12 on each side in a pairwise head-to-tail manner, and the SMP-LTD domains of mmm1 and mdm12 generate a continuous hydrophobic tunnel for phospholipid trafficking.

The protein resides in the mitochondrion outer membrane. It localises to the endoplasmic reticulum membrane. Functionally, component of the ERMES/MDM complex, which serves as a molecular tether to connect the endoplasmic reticulum (ER) and mitochondria. Components of this complex are involved in the control of mitochondrial shape and protein biogenesis, and function in nonvesicular lipid trafficking between the ER and mitochondria. Mdm12 is required for the interaction of the ER-resident membrane protein mmm1 and the outer mitochondrial membrane-resident beta-barrel protein mdm10. The mdm12-mmm1 subcomplex functions in the major beta-barrel assembly pathway that is responsible for biogenesis of all mitochondrial outer membrane beta-barrel proteins, and acts in a late step after the SAM complex. The mdm10-mdm12-mmm1 subcomplex further acts in the TOM40-specific pathway after the action of the mdm12-mmm1 complex. Essential for establishing and maintaining the structure of mitochondria and maintenance of mtDNA nucleoids. This Sclerotinia sclerotiorum (strain ATCC 18683 / 1980 / Ss-1) (White mold) protein is Mitochondrial distribution and morphology protein 12.